A 312-amino-acid polypeptide reads, in one-letter code: Dihydroorotate dehydrogenase B (NAD(+)), catalytic subunit (312 aa).

FMN-binding positions include Ser-23 and 47–48 (KA). Substrate-binding positions include Lys-47 and 71-75 (NAIGL). Asn-102 and Asn-130 together coordinate FMN. Position 130 (Asn-130) interacts with substrate. Cys-133 functions as the Nucleophile in the catalytic mechanism. 2 residues coordinate FMN: Lys-168 and Ile-194. Residue 195–196 (NT) coordinates substrate. Residues Gly-220, 246-247 (GG), and 268-269 (GT) contribute to the FMN site.

This sequence belongs to the dihydroorotate dehydrogenase family. Type 1 subfamily. Heterotetramer of 2 PyrK and 2 PyrD type B subunits. FMN is required as a cofactor.

It localises to the cytoplasm. It catalyses the reaction (S)-dihydroorotate + NAD(+) = orotate + NADH + H(+). It functions in the pathway pyrimidine metabolism; UMP biosynthesis via de novo pathway; orotate from (S)-dihydroorotate (NAD(+) route): step 1/1. Functionally, catalyzes the conversion of dihydroorotate to orotate with NAD(+) as electron acceptor. The polypeptide is Dihydroorotate dehydrogenase B (NAD(+)), catalytic subunit (pyrDB) (Enterococcus faecalis (strain ATCC 700802 / V583)).